Here is a 515-residue protein sequence, read N- to C-terminus: Bifunctional purine biosynthesis protein PurH (515 aa).

An MGS-like domain is found at 1 to 145; sequence MTKRALISVS…KNHASVTVVV (145 aa).

The protein belongs to the PurH family.

It catalyses the reaction (6R)-10-formyltetrahydrofolate + 5-amino-1-(5-phospho-beta-D-ribosyl)imidazole-4-carboxamide = 5-formamido-1-(5-phospho-D-ribosyl)imidazole-4-carboxamide + (6S)-5,6,7,8-tetrahydrofolate. It carries out the reaction IMP + H2O = 5-formamido-1-(5-phospho-D-ribosyl)imidazole-4-carboxamide. It functions in the pathway purine metabolism; IMP biosynthesis via de novo pathway; 5-formamido-1-(5-phospho-D-ribosyl)imidazole-4-carboxamide from 5-amino-1-(5-phospho-D-ribosyl)imidazole-4-carboxamide (10-formyl THF route): step 1/1. It participates in purine metabolism; IMP biosynthesis via de novo pathway; IMP from 5-formamido-1-(5-phospho-D-ribosyl)imidazole-4-carboxamide: step 1/1. This chain is Bifunctional purine biosynthesis protein PurH, found in Streptococcus uberis (strain ATCC BAA-854 / 0140J).